We begin with the raw amino-acid sequence, 60 residues long: Ixodegrin YY-39 (60 aa).

The N-terminal stretch at 1 to 21 (MNAALIAALLILGALTLDATA) is a signal peptide. The Cell attachment site signature appears at 49 to 51 (RGD).

This sequence belongs to the ixodegrin family. Contains 3 disulfide bonds. Expressed in salivary glands.

It localises to the secreted. In terms of biological role, tick salivary platelet aggregation inhibitor that plays an important part in the anti-hemostatic strategy of ticks. Inhibits platelet aggregation induced by ADP, thrombin and thromboxane A2 (TXA2). Blocks platelet adhesion to soluble collagen (most probably through the binding to alpha-2/beta-1 integrin (ITGA2/ITGB1)) and binds to purified glycoprotein IIb/IIIa (ITGA2B/ITGB3) in a dose-dependent manner. In vivo, reduces thrombus weight effectively in a rat arteriovenous shunt model and inhibits thrombosis in a carrageenan-induced mouse tail thrombosis model. This Ixodes scapularis (Black-legged tick) protein is Ixodegrin YY-39.